Reading from the N-terminus, the 102-residue chain is Large ribosomal subunit protein bL21 (102 aa).

Belongs to the bacterial ribosomal protein bL21 family. In terms of assembly, part of the 50S ribosomal subunit. Contacts protein L20.

Functionally, this protein binds to 23S rRNA in the presence of protein L20. This Campylobacter jejuni subsp. jejuni serotype O:6 (strain 81116 / NCTC 11828) protein is Large ribosomal subunit protein bL21.